A 431-amino-acid polypeptide reads, in one-letter code: Serine/threonine-protein kinase Sgk1 (431 aa).

Positions 1–60 (MTVKAEAARSTLTYSRMRGMVAILIAFMKQRRMGLNDFIQKIASNTYACKHAEVQSILKM) are necessary for localization to the mitochondria. A disordered region spans residues 65 to 92 (EPELMNANPSPPPSPSQQINLGPSSNPH). Ser-74 is modified (phosphoserine). Ser-78 carries the post-translational modification Phosphoserine; by MAPK7. Residues 81-91 (QQINLGPSSNP) are compositionally biased toward polar residues. The Protein kinase domain maps to 98-355 (FHFLKVIGKG…FMEIKSHIFF (258 aa)). ATP is bound by residues 104–112 (IGKGSFGKV) and Lys-127. The Nuclear localization signal signature appears at 131–141 (KKAILKKKEEK). Asp-222 (proton acceptor) is an active-site residue. The residue at position 256 (Thr-256) is a Phosphothreonine; by PDPK1. In terms of domain architecture, AGC-kinase C-terminal spans 356–431 (SLINWDDLIN…SYAPPVDSFL (76 aa)). The residue at position 369 (Thr-369) is a Phosphothreonine; by PKA. Ser-397, Ser-401, and Ser-422 each carry phosphoserine.

It belongs to the protein kinase superfamily. AGC Ser/Thr protein kinase family. As to quaternary structure, homodimer; disulfide-linked. Interacts with MAPK3/ERK1, MAPK1/ERK2, MAP2K1/MEK1, MAP2K2/MEK2, NEDD4, NEDD4L, MAPT/TAU, MAPK7, CREB1, SLC9A3R2/NHERF2 and KCNJ1/ROMK1. Forms a trimeric complex with FBXW7 and NOTCH1 Associates with the mammalian target of rapamycin complex 2 (mTORC2) via an interaction with MAPKAP1/SIN1. Post-translationally, regulated by phosphorylation. Activated by phosphorylation on Ser-422 by mTORC2, transforming it into a substrate for PDPK1 which phosphorylates it on Thr-256. Phosphorylation on Ser-397 and Ser-401 are also essential for its activity. Phosphorylation on Ser-78 by MAPK7 is required for growth factor-induced cell cycle progression. Ubiquitinated by NEDD4L; which promotes proteasomal degradation. Ubiquitinated by SYVN1 at the endoplasmic reticulum; which promotes rapid proteasomal degradation and maintains a high turnover rate in resting cells.

Its subcellular location is the cytoplasm. The protein localises to the nucleus. The protein resides in the endoplasmic reticulum membrane. It is found in the cell membrane. It localises to the mitochondrion. It carries out the reaction L-seryl-[protein] + ATP = O-phospho-L-seryl-[protein] + ADP + H(+). The catalysed reaction is L-threonyl-[protein] + ATP = O-phospho-L-threonyl-[protein] + ADP + H(+). With respect to regulation, two specific sites, one in the kinase domain (Thr-256) and the other in the C-terminal regulatory region (Ser-422), need to be phosphorylated for its full activation. Phosphorylation at Ser-397 and Ser-401 are also essential for its activity. Activated by WNK1, WNK2, WNK3 and WNK4; which promote phosphorylation by mTORC2. Serine/threonine-protein kinase which is involved in the regulation of a wide variety of ion channels, membrane transporters, cellular enzymes, transcription factors, neuronal excitability, cell growth, proliferation, survival, migration and apoptosis. Plays an important role in cellular stress response. Contributes to regulation of renal Na(+) retention, renal K(+) elimination, salt appetite, gastric acid secretion, intestinal Na(+)/H(+) exchange and nutrient transport, insulin-dependent salt sensitivity of blood pressure, salt sensitivity of peripheral glucose uptake, cardiac repolarization and memory consolidation. Up-regulates Na(+) channels: SCNN1A/ENAC, SCN5A and ASIC1/ACCN2, K(+) channels: KCNJ1/ROMK1, KCNA1-5, KCNQ1-5 and KCNE1, epithelial Ca(2+) channels: TRPV5 and TRPV6, chloride channels: BSND, CLCN2 and CFTR, glutamate transporters: SLC1A3/EAAT1, SLC1A2 /EAAT2, SLC1A1/EAAT3, SLC1A6/EAAT4 and SLC1A7/EAAT5, amino acid transporters: SLC1A5/ASCT2, SLC38A1/SN1 and SLC6A19, creatine transporter: SLC6A8, Na(+)/dicarboxylate cotransporter: SLC13A2/NADC1, Na(+)-dependent phosphate cotransporter: SLC34A2/NAPI-2B, glutamate receptor: GRIK2/GLUR6. Up-regulates carriers: SLC9A3/NHE3, SLC12A1/NKCC2, SLC12A3/NCC, SLC5A3/SMIT, SLC2A1/GLUT1, SLC5A1/SGLT1 and SLC15A2/PEPT2. Regulates enzymes: GSK3A/B, PMM2 and Na(+)/K(+) ATPase, and transcription factors: CTNNB1 and nuclear factor NF-kappa-B. Stimulates sodium transport into epithelial cells by enhancing the stability and expression of SCNN1A/ENAC. This is achieved by phosphorylating the NEDD4L ubiquitin E3 ligase, promoting its interaction with 14-3-3 proteins, thereby preventing it from binding to SCNN1A/ENAC and targeting it for degradation. Regulates store-operated Ca(+2) entry (SOCE) by stimulating ORAI1 and STIM1. Regulates KCNJ1/ROMK1 directly via its phosphorylation or indirectly via increased interaction with SLC9A3R2/NHERF2. Phosphorylates MDM2 and activates MDM2-dependent ubiquitination of p53/TP53. Phosphorylates MAPT/TAU and mediates microtubule depolymerization and neurite formation in hippocampal neurons. Phosphorylates SLC2A4/GLUT4 and up-regulates its activity. Phosphorylates APBB1/FE65 and promotes its localization to the nucleus. Phosphorylates MAPK1/ERK2 and activates it by enhancing its interaction with MAP2K1/MEK1 and MAP2K2/MEK2. Phosphorylates FBXW7 and plays an inhibitory role in the NOTCH1 signaling. Phosphorylates FOXO1 resulting in its relocalization from the nucleus to the cytoplasm. Phosphorylates FOXO3, promoting its exit from the nucleus and interference with FOXO3-dependent transcription. Phosphorylates BRAF and MAP3K3/MEKK3 and inhibits their activity. Phosphorylates SLC9A3/NHE3 in response to dexamethasone, resulting in its activation and increased localization at the cell membrane. Phosphorylates CREB1. Necessary for vascular remodeling during angiogenesis. This chain is Serine/threonine-protein kinase Sgk1 (Sgk1), found in Mus musculus (Mouse).